Reading from the N-terminus, the 426-residue chain is Glucan 1,3-beta-glucosidase (426 aa).

The signal sequence occupies residues 1–20 (MLYPRALLPAAVALASLVLA). The Proton donor role is filled by Glu-208. Disulfide bonds link Cys-290-Cys-416 and Cys-315-Cys-343. Glu-307 serves as the catalytic Nucleophile.

This sequence belongs to the glycosyl hydrolase 5 (cellulase A) family.

It localises to the secreted. The enzyme catalyses Successive hydrolysis of beta-D-glucose units from the non-reducing ends of (1-&gt;3)-beta-D-glucans, releasing alpha-glucose.. Beta-glucanases participate in the metabolism of beta-glucan, the main structural component of the cell wall. It could also function biosynthetically as a transglycosylase. This is Glucan 1,3-beta-glucosidase from Blumeria graminis (Powdery mildew).